A 406-amino-acid polypeptide reads, in one-letter code: Acetylornithine/succinyldiaminopimelate aminotransferase (406 aa).

Residues 108-109 (GT) and phenylalanine 141 contribute to the pyridoxal 5'-phosphate site. N(2)-acetyl-L-ornithine is bound at residue arginine 144. 226 to 229 (DEVQ) is a binding site for pyridoxal 5'-phosphate. Lysine 255 carries the N6-(pyridoxal phosphate)lysine modification. A N(2)-acetyl-L-ornithine-binding site is contributed by serine 283. Threonine 284 provides a ligand contact to pyridoxal 5'-phosphate.

The protein belongs to the class-III pyridoxal-phosphate-dependent aminotransferase family. ArgD subfamily. In terms of assembly, homodimer. Pyridoxal 5'-phosphate serves as cofactor.

The protein resides in the cytoplasm. The enzyme catalyses N(2)-acetyl-L-ornithine + 2-oxoglutarate = N-acetyl-L-glutamate 5-semialdehyde + L-glutamate. It catalyses the reaction N-succinyl-(2S,6S)-2,6-diaminopimelate + 2-oxoglutarate = (S)-2-succinylamino-6-oxoheptanedioate + L-glutamate. It functions in the pathway amino-acid biosynthesis; L-arginine biosynthesis; N(2)-acetyl-L-ornithine from L-glutamate: step 4/4. Its pathway is amino-acid biosynthesis; L-lysine biosynthesis via DAP pathway; LL-2,6-diaminopimelate from (S)-tetrahydrodipicolinate (succinylase route): step 2/3. Involved in both the arginine and lysine biosynthetic pathways. This chain is Acetylornithine/succinyldiaminopimelate aminotransferase, found in Escherichia coli O6:H1 (strain CFT073 / ATCC 700928 / UPEC).